Here is a 283-residue protein sequence, read N- to C-terminus: Transmembrane protein 45B (283 aa).

The next 7 membrane-spanning stretches (helical) occupy residues 7–27 (HALP…KCPF), 55–75 (LIEG…EQFV), 99–119 (MYLF…SHHV), 121–141 (VGLD…LFYF), 153–173 (IHSL…MEVF), 187–207 (LAIL…PLSG), and 218–238 (IMFI…IVGI). The segment at 261–283 (GLRKSTSTDSSSQKALLQESDEE) is disordered. Residues 264–275 (KSTSTDSSSQKA) show a composition bias toward polar residues.

This sequence belongs to the TMEM45 family.

Its subcellular location is the membrane. The protein is Transmembrane protein 45B (tmem45b) of Danio rerio (Zebrafish).